We begin with the raw amino-acid sequence, 188 residues long: Peptidyl-tRNA hydrolase (188 aa).

Y14 is a binding site for tRNA. Catalysis depends on H19, which acts as the Proton acceptor. Residues Y64, N66, and N113 each contribute to the tRNA site.

It belongs to the PTH family. Monomer.

Its subcellular location is the cytoplasm. It carries out the reaction an N-acyl-L-alpha-aminoacyl-tRNA + H2O = an N-acyl-L-amino acid + a tRNA + H(+). Its function is as follows. Hydrolyzes ribosome-free peptidyl-tRNAs (with 1 or more amino acids incorporated), which drop off the ribosome during protein synthesis, or as a result of ribosome stalling. Functionally, catalyzes the release of premature peptidyl moieties from peptidyl-tRNA molecules trapped in stalled 50S ribosomal subunits, and thus maintains levels of free tRNAs and 50S ribosomes. This Chloroflexus aggregans (strain MD-66 / DSM 9485) protein is Peptidyl-tRNA hydrolase.